A 246-amino-acid polypeptide reads, in one-letter code: 2,5-diamino-6-ribosylamino-4(3H)-pyrimidinone 5'-phosphate reductase (246 aa).

NADP(+)-binding positions include Thr-78, Asp-82, Leu-163, and 186–190; that span reads GAEVL.

This sequence belongs to the HTP reductase family. In terms of assembly, homodimer.

The catalysed reaction is 2,5-diamino-6-(1-D-ribitylamino)pyrimidin-4(3H)-one 5'-phosphate + NADP(+) = 2,5-diamino-6-(1-D-ribosylamino)pyrimidin-4(3H)-one 5'-phosphate + NADPH + H(+). It catalyses the reaction 2,5-diamino-6-(1-D-ribitylamino)pyrimidin-4(3H)-one 5'-phosphate + NAD(+) = 2,5-diamino-6-(1-D-ribosylamino)pyrimidin-4(3H)-one 5'-phosphate + NADH + H(+). The protein operates within cofactor biosynthesis; riboflavin biosynthesis. Functionally, catalyzes an early step in riboflavin biosynthesis, the NADPH-dependent reduction of the ribose side chain of 2,5-diamino-6-ribosylamino-4(3H)-pyrimidinone 5'-phosphate, yielding 2,5-diamino-6-ribitylamino-4(3H)-pyrimidinone 5'-phosphate. The sequence is that of 2,5-diamino-6-ribosylamino-4(3H)-pyrimidinone 5'-phosphate reductase (RIB7) from Eremothecium gossypii (strain ATCC 10895 / CBS 109.51 / FGSC 9923 / NRRL Y-1056) (Yeast).